The sequence spans 293 residues: Light-independent protochlorophyllide reductase iron-sulfur ATP-binding protein (293 aa).

Residues 10–15 (GIGKST) and Lys-39 contribute to the ATP site. Ser-14 lines the Mg(2+) pocket. [4Fe-4S] cluster-binding residues include Cys-95 and Cys-129. Position 180 to 181 (180 to 181 (NR)) interacts with ATP.

This sequence belongs to the NifH/BchL/ChlL family. In terms of assembly, homodimer. Protochlorophyllide reductase is composed of three subunits; ChlL, ChlN and ChlB. Requires [4Fe-4S] cluster as cofactor.

The protein resides in the plastid. The protein localises to the chloroplast. It catalyses the reaction chlorophyllide a + oxidized 2[4Fe-4S]-[ferredoxin] + 2 ADP + 2 phosphate = protochlorophyllide a + reduced 2[4Fe-4S]-[ferredoxin] + 2 ATP + 2 H2O. It functions in the pathway porphyrin-containing compound metabolism; chlorophyll biosynthesis (light-independent). Its function is as follows. Component of the dark-operative protochlorophyllide reductase (DPOR) that uses Mg-ATP and reduced ferredoxin to reduce ring D of protochlorophyllide (Pchlide) to form chlorophyllide a (Chlide). This reaction is light-independent. The L component serves as a unique electron donor to the NB-component of the complex, and binds Mg-ATP. The chain is Light-independent protochlorophyllide reductase iron-sulfur ATP-binding protein from Adiantum capillus-veneris (Maidenhair fern).